Consider the following 1088-residue polypeptide: Protein unc-13 homolog D (1088 aa).

A disordered region spans residues 26 to 46 (VRDLQDPPPQATPEVQVQSHH). The C2 1 domain occupies 92 to 239 (QPEEHQQMLQ…FKEARKDKGQ (148 aa)). 2 residues coordinate Ca(2+): Asp127 and Asp133. Ser150 bears the Phosphoserine mark. 2 residues coordinate Ca(2+): Asp206 and Asp208. Residues 240 to 543 (DDFLGNVMLR…AKRVQDHTAA (304 aa)) form an interaction with RAB27A region. Residues 557–675 (FQLYVSLREF…RLALVYCSLI (119 aa)) enclose the MHD1 domain. One can recognise an MHD2 domain in the interval 786 to 893 (EDAILPLMKF…ASSRELIQKY (108 aa)). The C2 2 domain maps to 908–1033 (RLGAVTVKAS…PGLTGCVEPG (126 aa)). Residues Leu938, Asp939, Asp945, Asp1003, Asp1005, and Asp1011 each coordinate Ca(2+).

Belongs to the unc-13 family. Interacts with RAB27A and DOC2A. Interacts with RhoG; the interaction increases RhoG affinity to the membrane lipids, targets Unc13d to membrane lipids and facilitates cytotoxic granule (CG) docking to the plasma membrane. Ca(2+) serves as cofactor. As to expression, expressed in lung bronchial epithelium goblet/mucous cells. Also expressed in spleen and testis. Expressed at very low levels in heart muscle, kidney, liver, brain and skeletal muscle.

Its subcellular location is the cytoplasm. It localises to the membrane. The protein resides in the late endosome. The protein localises to the recycling endosome. It is found in the lysosome. Its function is as follows. Plays a role in cytotoxic granule exocytosis in lymphocytes. Required for both granule maturation and granule docking and priming at the immunologic synapse. Regulates assembly of recycling and late endosomal structures, leading to the formation of an endosomal exocytic compartment that fuses with perforin-containing granules at the immunologic synapse and licences them for exocytosis. Regulates Ca(2+)-dependent secretory lysosome exocytosis in mast cells. This chain is Protein unc-13 homolog D (Unc13d), found in Rattus norvegicus (Rat).